The sequence spans 400 residues: Enoyl-[acyl-carrier-protein] reductase [NADH] (400 aa).

Residues 48-53 (GSSSGY), 74-75 (FE), 111-112 (DA), and 139-140 (LA) contribute to the NAD(+) site. Position 225 (Tyr225) interacts with substrate. Tyr235 serves as the catalytic Proton donor. NAD(+)-binding positions include Lys244 and 273–275 (VVT).

This sequence belongs to the TER reductase family. As to quaternary structure, monomer.

The catalysed reaction is a 2,3-saturated acyl-[ACP] + NAD(+) = a (2E)-enoyl-[ACP] + NADH + H(+). It functions in the pathway lipid metabolism; fatty acid biosynthesis. Functionally, involved in the final reduction of the elongation cycle of fatty acid synthesis (FAS II). Catalyzes the reduction of a carbon-carbon double bond in an enoyl moiety that is covalently linked to an acyl carrier protein (ACP). This Aliivibrio fischeri (strain ATCC 700601 / ES114) (Vibrio fischeri) protein is Enoyl-[acyl-carrier-protein] reductase [NADH].